A 424-amino-acid chain; its full sequence is Tol-Pal system protein TolB (424 aa).

Residues 1 to 16 form the signal peptide; that stretch reads MKQLLVLILSLYTTLA.

It belongs to the TolB family. The Tol-Pal system is composed of five core proteins: the inner membrane proteins TolA, TolQ and TolR, the periplasmic protein TolB and the outer membrane protein Pal. They form a network linking the inner and outer membranes and the peptidoglycan layer.

It is found in the periplasm. Part of the Tol-Pal system, which plays a role in outer membrane invagination during cell division and is important for maintaining outer membrane integrity. This chain is Tol-Pal system protein TolB, found in Ruthia magnifica subsp. Calyptogena magnifica.